The chain runs to 725 residues: N-alpha-acetyltransferase 35, NatC auxiliary subunit (725 aa).

Ser-187 bears the Phosphoserine mark. The interval 548-573 (ERIMEEQQKGRSSKKTKKKKKVRPLS) is disordered. A compositionally biased stretch (basic residues) spans 558–571 (RSSKKTKKKKKVRP).

Belongs to the MAK10 family. Component of the N-terminal acetyltransferase C (NatC) complex, which is composed of NAA35, NAA38 and NAA30.

The protein resides in the cytoplasm. Its function is as follows. Auxillary component of the N-terminal acetyltransferase C (NatC) complex which catalyzes acetylation of N-terminal methionine residues. N-terminal acetylation protects proteins from ubiquitination and degradation by the N-end rule pathway. Involved in regulation of apoptosis and proliferation of smooth muscle cells. The protein is N-alpha-acetyltransferase 35, NatC auxiliary subunit (NAA35) of Macaca fascicularis (Crab-eating macaque).